The sequence spans 452 residues: MSQQGQAVARKFFGTDGIRGETNTGNMTPEIAMRVAQAAGEYFRRGDHRHRVVIGKDTRLSGYMMEAALVAGFTSVGMDVIQTGPLPTPAVALLTKEMRADLGVMISASHNPYRDNGIKLFGPDGFKLSDETELAIEQGIVSEPALVPAAEIGRARRIEDSRGRYIHALKQSVSDETRFDSLKVVVDCANGAAYQVAPSAIWELGAEIITLGVTPNGTNINDGVGSTSLDAIKRTVVEEGADIGIALDGDADRLIVIDEKGEAVDGDQIMGLIATRMAEKQALRGGGVVATVMSNLGLERYLDSKNLRLERTQVGDRYVLERMKTGGFNIGGEQSGHMILLDHATTGDGTVAALRVLASLVNSGKPASEVLHVFEKVPQLLKNVRYEGGRPLDKDSVQTAIADAEKALDGKGRLVIRPSGTEPVIRVMAEGDDADQVETVVDQICDAVKAAG.

Ser109 serves as the catalytic Phosphoserine intermediate. Mg(2+) is bound by residues Ser109, Asp248, Asp250, and Asp252. At Ser109 the chain carries Phosphoserine.

It belongs to the phosphohexose mutase family. It depends on Mg(2+) as a cofactor. Activated by phosphorylation.

The enzyme catalyses alpha-D-glucosamine 1-phosphate = D-glucosamine 6-phosphate. Its function is as follows. Catalyzes the conversion of glucosamine-6-phosphate to glucosamine-1-phosphate. This is Phosphoglucosamine mutase from Erythrobacter litoralis (strain HTCC2594).